We begin with the raw amino-acid sequence, 390 residues long: S-adenosylmethionine synthase 2 (390 aa).

Glu9 lines the Mg(2+) pocket. Residue His15 coordinates ATP. Glu43 provides a ligand contact to K(+). Glu56 and Gln99 together coordinate L-methionine. ATP contacts are provided by residues 167 to 169, 235 to 238, Asp246, 252 to 253, Ala269, Lys273, and Lys277; these read DGK, SGRF, and RK. Asp246 is a binding site for L-methionine. An L-methionine-binding site is contributed by Lys277.

It belongs to the AdoMet synthase family. In terms of assembly, homotetramer. It depends on Mn(2+) as a cofactor. Mg(2+) is required as a cofactor. The cofactor is Co(2+). K(+) serves as cofactor.

The protein localises to the cytoplasm. The enzyme catalyses L-methionine + ATP + H2O = S-adenosyl-L-methionine + phosphate + diphosphate. It participates in amino-acid biosynthesis; S-adenosyl-L-methionine biosynthesis; S-adenosyl-L-methionine from L-methionine: step 1/1. Its function is as follows. Catalyzes the formation of S-adenosylmethionine from methionine and ATP. The reaction comprises two steps that are both catalyzed by the same enzyme: formation of S-adenosylmethionine (AdoMet) and triphosphate, and subsequent hydrolysis of the triphosphate. This chain is S-adenosylmethionine synthase 2 (METK2), found in Solanum tuberosum (Potato).